Reading from the N-terminus, the 552-residue chain is Urocanate hydratase (552 aa).

Residues glycine 49–glycine 50, glutamine 127, glycine 173–glycine 175, aspartate 193, asparagine 239–alanine 240, glutamine 260–histidine 264, tyrosine 270–isoleucine 271, and tyrosine 319 contribute to the NAD(+) site. Residue cysteine 407 is part of the active site. Glycine 489 lines the NAD(+) pocket.

The protein belongs to the urocanase family. It depends on NAD(+) as a cofactor.

The protein localises to the cytoplasm. It carries out the reaction 4-imidazolone-5-propanoate = trans-urocanate + H2O. Its pathway is amino-acid degradation; L-histidine degradation into L-glutamate; N-formimidoyl-L-glutamate from L-histidine: step 2/3. Its function is as follows. Catalyzes the conversion of urocanate to 4-imidazolone-5-propionate. The protein is Urocanate hydratase of Bacillus anthracis (strain CDC 684 / NRRL 3495).